We begin with the raw amino-acid sequence, 323 residues long: CYFIP-related Rac1 interactor A (323 aa).

This sequence belongs to the CYRI family. As to quaternary structure, interacts with RAC1 (GTP-bound form preferentially).

The protein localises to the membrane. May negatively regulate RAC1 signaling and RAC1-driven cytoskeletal remodeling. May regulate chemotaxis, cell migration and epithelial polarization by controlling the polarity, plasticity, duration and extent of protrusions. The protein is CYFIP-related Rac1 interactor A (CYRIA) of Bos taurus (Bovine).